A 406-amino-acid chain; its full sequence is Heparan sulfate glucosamine 3-O-sulfotransferase 3A1 (406 aa).

The Cytoplasmic portion of the chain corresponds to 1–24 (MAPPGPASALSTSAEPLSRSIFRK). A helical; Signal-anchor for type II membrane protein membrane pass occupies residues 25–43 (FLLMLCSLLTSLYVFYCLA). Residues 44-406 (ERCQTLSGPV…MTGHDFGWDG (363 aa)) are Lumenal-facing. A compositionally biased stretch (basic residues) spans 92-102 (QLPQWRRRRPP). The interval 92–134 (QLPQWRRRRPPAPRDDGEEAAWEEESPGLSGGPGGSGAGSTVA) is disordered. Positions 107 to 117 (DGEEAAWEEES) are enriched in acidic residues. Gly residues predominate over residues 120–129 (LSGGPGGSGA). 3'-phosphoadenylyl sulfate is bound at residue 162-166 (KGGTR). Substrate-binding positions include arginine 166, 184–190 (EPHFFDR), and 215–218 (KTPS). The 3'-phosphoadenylyl sulfate site is built by arginine 243 and serine 251. Residue 255–259 (QTLSK) coordinates substrate. N-linked (GlcNAc...) asparagine glycosylation is present at asparagine 273. 283 to 284 (WS) is a substrate binding site. The N-linked (GlcNAc...) asparagine glycan is linked to asparagine 344. A disulfide bridge links cysteine 351 with cysteine 363. 367–370 (TKGR) contributes to the substrate binding site. 368 to 372 (KGRTH) contacts 3'-phosphoadenylyl sulfate.

The protein belongs to the sulfotransferase 1 family. In terms of tissue distribution, ubiquitous. Most abundant in heart and placenta, followed by liver and kidney.

Its subcellular location is the golgi apparatus membrane. The catalysed reaction is alpha-D-glucosaminyl-[heparan sulfate](n) + 3'-phosphoadenylyl sulfate = 3-sulfo-alpha-D-glucosaminyl-[heparan sulfate](n) + adenosine 3',5'-bisphosphate + H(+). Its function is as follows. Sulfotransferase that utilizes 3'-phospho-5'-adenylyl sulfate (PAPS) to catalyze the transfer of a sulfo group to an N-unsubstituted glucosamine linked to a 2-O-sulfo iduronic acid unit on heparan sulfate. Catalyzes the O-sulfation of glucosamine in IdoUA2S-GlcNS and also in IdoUA2S-GlcNH2. The substrate-specific O-sulfation generates an enzyme-modified heparan sulfate which acts as a binding receptor to Herpes simplex virus-1 (HSV-1) and permits its entry. Unlike HS3ST1/3-OST-1, does not convert non-anticoagulant heparan sulfate to anticoagulant heparan sulfate. This Homo sapiens (Human) protein is Heparan sulfate glucosamine 3-O-sulfotransferase 3A1 (HS3ST3A1).